The following is a 203-amino-acid chain: FMN-dependent NADH:quinone oxidoreductase (203 aa).

FMN contacts are provided by residues Ser-9, 15 to 17 (SVS), and 138 to 141 (SRGG).

It belongs to the azoreductase type 1 family. In terms of assembly, homodimer. FMN serves as cofactor.

The enzyme catalyses 2 a quinone + NADH + H(+) = 2 a 1,4-benzosemiquinone + NAD(+). It carries out the reaction N,N-dimethyl-1,4-phenylenediamine + anthranilate + 2 NAD(+) = 2-(4-dimethylaminophenyl)diazenylbenzoate + 2 NADH + 2 H(+). In terms of biological role, quinone reductase that provides resistance to thiol-specific stress caused by electrophilic quinones. Its function is as follows. Also exhibits azoreductase activity. Catalyzes the reductive cleavage of the azo bond in aromatic azo compounds to the corresponding amines. In Methylorubrum extorquens (strain CM4 / NCIMB 13688) (Methylobacterium extorquens), this protein is FMN-dependent NADH:quinone oxidoreductase.